Reading from the N-terminus, the 790-residue chain is Penicillin-binding protein 1A (790 aa).

The Cytoplasmic segment spans residues Met1–Phe6. A helical; Signal-anchor for type II membrane protein membrane pass occupies residues Phe7–Ile27. Topologically, residues Tyr28–Tyr790 are periplasmic. The transglycosylase stretch occupies residues Thr49–Ala220. Glu87 acts as the Proton donor; for transglycosylase activity in catalysis. The segment at Asp398–Asp711 is transpeptidase. Residue Ser457 is the Acyl-ester intermediate; for transpeptidase activity of the active site.

In the N-terminal section; belongs to the glycosyltransferase 51 family. It in the C-terminal section; belongs to the transpeptidase family.

Its subcellular location is the cell inner membrane. It catalyses the reaction [GlcNAc-(1-&gt;4)-Mur2Ac(oyl-L-Ala-gamma-D-Glu-L-Lys-D-Ala-D-Ala)](n)-di-trans,octa-cis-undecaprenyl diphosphate + beta-D-GlcNAc-(1-&gt;4)-Mur2Ac(oyl-L-Ala-gamma-D-Glu-L-Lys-D-Ala-D-Ala)-di-trans,octa-cis-undecaprenyl diphosphate = [GlcNAc-(1-&gt;4)-Mur2Ac(oyl-L-Ala-gamma-D-Glu-L-Lys-D-Ala-D-Ala)](n+1)-di-trans,octa-cis-undecaprenyl diphosphate + di-trans,octa-cis-undecaprenyl diphosphate + H(+). It carries out the reaction Preferential cleavage: (Ac)2-L-Lys-D-Ala-|-D-Ala. Also transpeptidation of peptidyl-alanyl moieties that are N-acyl substituents of D-alanine.. Its pathway is cell wall biogenesis; peptidoglycan biosynthesis. Cell wall formation. Synthesis of cross-linked peptidoglycan from the lipid intermediates. The enzyme has a penicillin-insensitive transglycosylase N-terminal domain (formation of linear glycan strands) and a penicillin-sensitive transpeptidase C-terminal domain (cross-linking of the peptide subunits). This is Penicillin-binding protein 1A (mrcA) from Rickettsia felis (strain ATCC VR-1525 / URRWXCal2) (Rickettsia azadi).